Here is a 396-residue protein sequence, read N- to C-terminus: S-adenosylmethionine synthase (396 aa).

His16 serves as a coordination point for ATP. Asp18 contacts Mg(2+). K(+) is bound at residue Glu44. Positions 57 and 100 each coordinate L-methionine. The flexible loop stretch occupies residues 100–110; the sequence is QSVDIAQGVDR. Residues 165–167, Asp240, 246–247, Ala263, and Lys267 contribute to the ATP site; these read DAK and RK. Asp240 provides a ligand contact to L-methionine. Lys271 is an L-methionine binding site.

This sequence belongs to the AdoMet synthase family. In terms of assembly, homotetramer; dimer of dimers. Mg(2+) is required as a cofactor. Requires K(+) as cofactor.

It localises to the cytoplasm. The catalysed reaction is L-methionine + ATP + H2O = S-adenosyl-L-methionine + phosphate + diphosphate. The protein operates within amino-acid biosynthesis; S-adenosyl-L-methionine biosynthesis; S-adenosyl-L-methionine from L-methionine: step 1/1. Functionally, catalyzes the formation of S-adenosylmethionine (AdoMet) from methionine and ATP. The overall synthetic reaction is composed of two sequential steps, AdoMet formation and the subsequent tripolyphosphate hydrolysis which occurs prior to release of AdoMet from the enzyme. This chain is S-adenosylmethionine synthase, found in Pseudomonas syringae pv. tomato (strain ATCC BAA-871 / DC3000).